The following is a 352-amino-acid chain: C-C chemokine receptor type 5 (352 aa).

Over 1–30 the chain is Extracellular; that stretch reads MDYQVSSPTYDIDYYTSEPCQKINVKQIAA. Tyrosine 3 is modified (sulfotyrosine). Serine 6 and serine 7 each carry an O-linked (GalNAc...) serine glycan. Sulfotyrosine is present on residues tyrosine 10, tyrosine 14, and tyrosine 15. 2 disulfide bridges follow: cysteine 20/cysteine 269 and cysteine 101/cysteine 178. A helical membrane pass occupies residues 31 to 58; that stretch reads RLLPPLYSLVFIFGFVGNILVVLILINC. The Cytoplasmic segment spans residues 59-68; sequence KRLKSMTDIY. A helical membrane pass occupies residues 69–89; the sequence is LLNLAISDLLFLLTVPFWAHY. The Extracellular portion of the chain corresponds to 90–102; that stretch reads AAAQWDFGNTMCQ. Residues 103–124 traverse the membrane as a helical segment; that stretch reads LLTGLYFIGFFSGIFFIILLTI. The Cytoplasmic segment spans residues 125-141; the sequence is DRYLAIVHAVFALKART. The helical transmembrane segment at 142–166 threads the bilayer; the sequence is VTFGVVTSVITWVVAVFASLPRIIF. Topologically, residues 167 to 198 are extracellular; the sequence is TTSHRERLHYTCSSHFPYSQYQFWKNFHTLKI. Residues 199–218 form a helical membrane-spanning segment; it reads VILGLVLPLLVMVICYSGIL. Residues 219–235 are Cytoplasmic-facing; it reads KTLLRCRNEKKRHRAVR. The chain crosses the membrane as a helical span at residues 236 to 260; the sequence is LIFTIMIVYFLFWAPYNIVLLLNTF. Residues 261–277 lie on the Extracellular side of the membrane; sequence QEFFGLNNCSSSNRLDQ. A helical transmembrane segment spans residues 278–301; the sequence is AMQVTETLGMTHCCINPIIYAFVG. The Cytoplasmic portion of the chain corresponds to 302-352; the sequence is EKFRNYLLVFFQKHIAKRFCKCCSIFQQEAPERASSVYTRSTGEQEISVGL. 3 S-palmitoyl cysteine lipidation sites follow: cysteine 321, cysteine 323, and cysteine 324. Residues serine 336, serine 337, serine 342, and serine 349 each carry the phosphoserine; by BARK1 modification.

Belongs to the G-protein coupled receptor 1 family. As to quaternary structure, interacts with PRAF2. Efficient ligand binding to CCL3/MIP-1alpha and CCL4/MIP-1beta requires sulfation, O-glycosylation and sialic acid modifications. Glycosylation on Ser-6 is required for efficient binding of CCL4. Interacts with GRK2. Interacts with ARRB1 and ARRB2. Interacts with CNIH4. Interacts with S100A4; this interaction stimulates T-lymphocyte chemotaxis. Post-translationally, sulfated on at least 2 of the N-terminal tyrosines. Sulfation is required for efficient binding of the chemokines, CCL3 and CCL4. In terms of processing, palmitoylation in the C-terminal is important for cell surface expression. Phosphorylation on serine residues in the C-terminal is stimulated by binding CC chemokines especially by APO-RANTES. Post-translationally, O-glycosylated, but not N-glycosylated. Ser-6 appears to be the major site even if Ser-7 may be also O-glycosylated. Also sialylated glycans present which contribute to chemokine binding. Thr-16 and Ser-17 may also be glycosylated and, if so, with small moieties such as a T-antigen.

The protein localises to the cell membrane. In terms of biological role, receptor for a number of inflammatory CC-chemokines including CCL3/MIP-1-alpha, CCL4/MIP-1-beta and RANTES and subsequently transduces a signal by increasing the intracellular calcium ion level. May play a role in the control of granulocytic lineage proliferation or differentiation. Participates in T-lymphocyte migration to the infection site by acting as a chemotactic receptor. The chain is C-C chemokine receptor type 5 (CCR5) from Cercopithecus ascanius (Black-cheeked white-nosed monkey).